A 48-amino-acid polypeptide reads, in one-letter code: MPQLVPFYFTNQIFYGFASLSVIVYLFSIYILPHYLEIYVTRIFITKT.

An N-formylmethionine modification is found at methionine 1. Over 1 to 12 (MPQLVPFYFTNQ) the chain is Mitochondrial intermembrane. Residues 13-32 (IFYGFASLSVIVYLFSIYIL) traverse the membrane as a helical segment. Residues 33 to 48 (PHYLEIYVTRIFITKT) are Mitochondrial matrix-facing.

In terms of assembly, F-type ATP synthases have 2 components, the catalytic core F(1) and the membrane-embedded component F(0), linked together by a central stalk and a peripheral stalk. The central stalk, also called rotor shaft, is often seen as part of F(1). The peripheral stalk is seen as part of F(0). F(0) contains the membrane channel next to the rotor. F-type ATP synthases form dimers but each monomer functions independently in ATP generation. The dimer consists of 17 different polypeptides: ATP1 (subunit alpha, 3 molecules per monomer, part of F(1)), ATP2 (subunit beta, 3 copies per monomer, part of F(1)), ATP3 (subunit gamma, part of the central stalk), ATP4 (subunit b, part of the peripheral stalk), ATP5/OSCP (subunit 5/OSCP, part of the peripheral stalk), ATP6 (subunit a, part of the peripheral stalk), ATP7 (subunit d, part of the peripheral stalk), ATP8 (subunit 8, part of the peripheral stalk), OLI1 (subunit c, part of the rotor, 10 molecules per monomer), ATP14 (subunit h, part of the peripheral stalk), ATP15 (subunit epsilon, part of the central stalk), ATP16 (subunit delta, part of the central stalk), ATP17 (subunit f, part of the peripheral stalk), ATP18 (subunit i/j, part of the peripheral stalk), ATP19 (subunit k, dimer-specific, at interface between monomers), ATP20 (subunit g, at interface between monomers), TIM11 (subunit e, at interface between monomers).

It localises to the mitochondrion inner membrane. Its function is as follows. Mitochondrial membrane ATP synthase (F(1)F(0) ATP synthase or Complex V) produces ATP from ADP in the presence of a proton gradient across the membrane which is generated by electron transport complexes of the respiratory chain. F-type ATP synthases consist of two structural domains, F(1) - containing the extramembraneous catalytic core, and F(0) - containing the membrane proton channel, linked together by a central stalk and a peripheral stalk. During catalysis, ATP synthesis in the catalytic domain of F(1) is coupled via a rotary mechanism of the central stalk subunits to proton translocation. Part of the complex F(0) domain. Minor subunit located with subunit a/ATP6 in the membrane. This chain is ATP synthase protein 8, found in Yarrowia lipolytica (strain CLIB 122 / E 150) (Yeast).